Here is a 428-residue protein sequence, read N- to C-terminus: Dihydroorotase (428 aa).

Residues histidine 59 and histidine 61 each contribute to the Zn(2+) site. Substrate contacts are provided by residues 61–63 (HLR) and asparagine 93. Zn(2+)-binding residues include aspartate 151, histidine 178, and histidine 231. Position 277 (asparagine 277) interacts with substrate. A Zn(2+)-binding site is contributed by aspartate 304. Residue aspartate 304 is part of the active site. Substrate contacts are provided by residues histidine 308 and 322-323 (FG).

The protein belongs to the metallo-dependent hydrolases superfamily. DHOase family. Class I DHOase subfamily. Requires Zn(2+) as cofactor.

The catalysed reaction is (S)-dihydroorotate + H2O = N-carbamoyl-L-aspartate + H(+). Its pathway is pyrimidine metabolism; UMP biosynthesis via de novo pathway; (S)-dihydroorotate from bicarbonate: step 3/3. Catalyzes the reversible cyclization of carbamoyl aspartate to dihydroorotate. This is Dihydroorotase from Bacillus cereus (strain ATCC 14579 / DSM 31 / CCUG 7414 / JCM 2152 / NBRC 15305 / NCIMB 9373 / NCTC 2599 / NRRL B-3711).